Here is a 358-residue protein sequence, read N- to C-terminus: Bis(monoacylglycero)phosphate synthase CLN5 (358 aa).

Residues 1 to 23 (MAQVGSAGPGACGRRGAGAGAGP) form a disordered region. At 1–29 (MAQVGSAGPGACGRRGAGAGAGPERTTWR) the chain is on the cytoplasmic side. Positions 7–21 (AGPGACGRRGAGAGA) are enriched in gly residues. Residues 30–46 (WAPALLWLATAAAVAGD) traverse the membrane as a helical; Signal-anchor for type II membrane protein segment. Residues 47–358 (PSRRQWPVPY…NRKNRTLSGL (312 aa)) are Lumenal-facing. Intrachain disulfides connect cysteine 69–cysteine 158 and cysteine 76–cysteine 164. The active-site Proton acceptor is histidine 116. N-linked (GlcNAc...) asparagine glycosylation is found at asparagine 129, asparagine 142, asparagine 177, and asparagine 202. The active-site Nucleophile; Acyl-thioester intermediate is the cysteine 230. 3 N-linked (GlcNAc...) asparagine glycosylation sites follow: asparagine 254, asparagine 270, and asparagine 280. Residues 303-342 (FLLSLLQIFDAVVIHREFYLFYNFEYWFLPMKYPFIKITY) form a membrane-anchoring region. An N-linked (GlcNAc...) asparagine glycan is attached at asparagine 352.

This sequence belongs to the CLN5 family. As to quaternary structure, multimer. Interacts with SORT1, RAB5A and RAB7A. Interacts with PPT1, TPP1, CLN3, CLN6, CLN8, ATP5F1A and ATP5F1B. Post-translationally, N-glycosylated with both high mannose and complex type sugars. Glycosylation is important for proper folding and trafficking to the lysosomes. The type II membrane signal anchor is proteolytically cleaved to produce a mature form that is transported to the lysosomes (Bis(monoacylglycero)phosphate synthase CLN5, secreted form). In terms of processing, can undergo proteolytic cleavage at the C-terminus, probably by a cysteine protease and may involve the removal of approximately 10-15 residues from the C-terminal end.

The protein localises to the lysosome. The protein resides in the membrane. It catalyses the reaction S-hexadecanoyl-L-cysteinyl-[protein] + H2O = L-cysteinyl-[protein] + hexadecanoate + H(+). It carries out the reaction 2 1-acyl-sn-glycero-3-phospho-(1'-sn-glycerol) = 1-acyl-sn-glycero-3-phospho-(3'-acyl-sn-1'-glycerol) + sn-glycero-3-phospho-(1'-sn-glycerol). The catalysed reaction is 2 1-(9Z-octadecenoyl)-sn-glycero-3-phospho-(1'-sn-glycerol) = 1-(9Z-octadecenoyl)-sn-glycero-3-phospho-(3'-(9Z-octadecenoyl)-1'-sn-glycerol) + sn-glycero-3-phospho-(1'-sn-glycerol). The enzyme catalyses 2 1-octadecanoyl-sn-glycero-3-phospho-(1'-sn-glycerol) = 1-octadecanoyl-sn-glycero-3-phospho-(3'-octadecanoyl-1'-sn-glycerol) + sn-glycero-3-phospho-(1'-sn-glycerol). It catalyses the reaction 2 1-hexadecanoyl-sn-glycero-3-phospho-(1'-sn-glycerol) = 1-hexadecanoyl-sn-glycero-3-phospho-(3'-hexadecanoyl-1'-sn-glycerol) + sn-glycero-3-phospho-(1'-sn-glycerol). It carries out the reaction 2 1-tetradecanoyl-sn-glycero-3-phospho-(1'-sn-glycerol) = 1-tetradecanoyl-sn-glycero-3-phospho-(3'-tetradecanoyl-1'-sn-glycerol) + sn-glycero-3-phospho-(1'-sn-glycerol). Catalyzes the synthesis of bis(monoacylglycero)phosphate (BMP) via transacylation of 2 molecules of lysophosphatidylglycerol (LPG). BMP also known as lysobisphosphatidic acid plays a key role in the formation of intraluminal vesicles and in maintaining intracellular cholesterol homeostasis. Can use only LPG as the exclusive lysophospholipid acyl donor for base exchange and displays BMP synthase activity towards various LPGs (LPG 14:0, LPG 16:0, LPG 18:0, LPG 18:1) with a higher preference for longer chain lengths. Plays a role in influencing the retrograde trafficking of lysosomal sorting receptors SORT1 and IGF2R from the endosomes to the trans-Golgi network by controlling the recruitment of retromer complex to the endosomal membrane. Regulates the localization and activation of RAB7A which is required to recruit the retromer complex to the endosomal membrane. Functionally, exhibits palmitoyl protein thioesterase (S-depalmitoylation) activity in vitro and most likely plays a role in protein S-depalmitoylation. This is Bis(monoacylglycero)phosphate synthase CLN5 (CLN5) from Bos taurus (Bovine).